Here is a 116-residue protein sequence, read N- to C-terminus: Large ribosomal subunit protein bL19 (116 aa).

The protein belongs to the bacterial ribosomal protein bL19 family.

Functionally, this protein is located at the 30S-50S ribosomal subunit interface and may play a role in the structure and function of the aminoacyl-tRNA binding site. The chain is Large ribosomal subunit protein bL19 from Flavobacterium johnsoniae (strain ATCC 17061 / DSM 2064 / JCM 8514 / BCRC 14874 / CCUG 350202 / NBRC 14942 / NCIMB 11054 / UW101) (Cytophaga johnsonae).